Here is a 714-residue protein sequence, read N- to C-terminus: Fumarate reductase flavoprotein subunit (714 aa).

Residues 13-16, 42-44, and 49-50 contribute to the FAD site; these read GGLA, SHS, and GG. His-43 carries the post-translational modification Tele-8alpha-FAD histidine. Residues His-257 and Arg-273 contribute to the active site. FAD is bound by residues Glu-420 and 436-437; that span reads SV.

Belongs to the FAD-dependent oxidoreductase 2 family. FRD/SDH subfamily. Part of an enzyme complex containing three subunits: a flavoprotein (frdA), an iron-sulfur protein (frdB), and diheme cytochrome b (frdC). The cofactor is FAD.

It is found in the cell inner membrane. The enzyme catalyses a quinone + succinate = fumarate + a quinol. Its function is as follows. The fumarate reductase enzyme complex is required for fumarate respiration. The protein is Fumarate reductase flavoprotein subunit (frdA) of Helicobacter pylori (strain J99 / ATCC 700824) (Campylobacter pylori J99).